Consider the following 366-residue polypeptide: Ribosomal RNA large subunit methyltransferase M (366 aa).

Residues serine 188, 221 to 224 (CPGG), aspartate 240, aspartate 260, and aspartate 277 contribute to the S-adenosyl-L-methionine site. The active-site Proton acceptor is the lysine 306.

This sequence belongs to the class I-like SAM-binding methyltransferase superfamily. RNA methyltransferase RlmE family. RlmM subfamily. Monomer.

It localises to the cytoplasm. It carries out the reaction cytidine(2498) in 23S rRNA + S-adenosyl-L-methionine = 2'-O-methylcytidine(2498) in 23S rRNA + S-adenosyl-L-homocysteine + H(+). Catalyzes the 2'-O-methylation at nucleotide C2498 in 23S rRNA. The protein is Ribosomal RNA large subunit methyltransferase M of Escherichia coli O127:H6 (strain E2348/69 / EPEC).